The chain runs to 366 residues: Putative neutrophil cytosol factor 1C (366 aa).

Residues 1 to 101 (MYMFLVKWQD…DFFKVRPDDL (101 aa)) enclose the PX domain. SH3 domains lie at 132–191 (IILQ…PLDS) and 202–261 (YAGE…KSGQ). Residues 261–366 (QDVSQAQRQI…STKRKLASAV (106 aa)) form a disordered region. A phosphoserine mark is found at S279 and S280. The segment covering 285–294 (HSIHQRSRKR) has biased composition (basic residues). Phosphoserine is present on residues S296, S304, S321, and S324.

It is found in the cytoplasm. In terms of biological role, may be required for activation of the latent NADPH oxidase (necessary for superoxide production). This Homo sapiens (Human) protein is Putative neutrophil cytosol factor 1C (NCF1C).